Here is a 630-residue protein sequence, read N- to C-terminus: Putative F-box/LRR-repeat protein At3g49150 (630 aa).

The F-box domain occupies Lys15–Ala63. LRR repeat units follow at residues Cys101–Cys129, Arg152–Lys178, Leu180–Asn205, Cys228–Asp253, Ile300–Val325, Asp337–Gly362, Cys406–Tyr436, Asp437–Arg465, and Asp567–Trp590.

The sequence is that of Putative F-box/LRR-repeat protein At3g49150 from Arabidopsis thaliana (Mouse-ear cress).